A 359-amino-acid chain; its full sequence is Phosphoribosylformylglycinamidine cyclo-ligase (359 aa).

It belongs to the AIR synthase family.

The protein localises to the cytoplasm. The catalysed reaction is 2-formamido-N(1)-(5-O-phospho-beta-D-ribosyl)acetamidine + ATP = 5-amino-1-(5-phospho-beta-D-ribosyl)imidazole + ADP + phosphate + H(+). Its pathway is purine metabolism; IMP biosynthesis via de novo pathway; 5-amino-1-(5-phospho-D-ribosyl)imidazole from N(2)-formyl-N(1)-(5-phospho-D-ribosyl)glycinamide: step 2/2. The polypeptide is Phosphoribosylformylglycinamidine cyclo-ligase (Brucella canis (strain ATCC 23365 / NCTC 10854 / RM-666)).